The chain runs to 230 residues: Large ribosomal subunit protein uL1 (230 aa).

The protein belongs to the universal ribosomal protein uL1 family. As to quaternary structure, part of the 50S ribosomal subunit.

Functionally, binds directly to 23S rRNA. The L1 stalk is quite mobile in the ribosome, and is involved in E site tRNA release. Its function is as follows. Protein L1 is also a translational repressor protein, it controls the translation of the L11 operon by binding to its mRNA. The sequence is that of Large ribosomal subunit protein uL1 from Methylobacillus flagellatus (strain ATCC 51484 / DSM 6875 / VKM B-1610 / KT).